Consider the following 424-residue polypeptide: Adenylosuccinate synthetase (424 aa).

GTP-binding positions include 12 to 18 (GDEGKGK) and 40 to 42 (GHT). The Proton acceptor role is filled by Asp13. Asp13 and Gly40 together coordinate Mg(2+). IMP is bound by residues 13–16 (DEGK), 38–41 (NAGH), Thr128, Arg142, Gln223, Thr238, and Arg302. His41 (proton donor) is an active-site residue. 298 to 304 (TTTGRPR) serves as a coordination point for substrate. GTP contacts are provided by residues Arg304, 330–332 (HVD), and 412–414 (GVG).

It belongs to the adenylosuccinate synthetase family. Homodimer. Requires Mg(2+) as cofactor.

Its subcellular location is the cytoplasm. It catalyses the reaction IMP + L-aspartate + GTP = N(6)-(1,2-dicarboxyethyl)-AMP + GDP + phosphate + 2 H(+). The protein operates within purine metabolism; AMP biosynthesis via de novo pathway; AMP from IMP: step 1/2. Its function is as follows. Plays an important role in the de novo pathway of purine nucleotide biosynthesis. Catalyzes the first committed step in the biosynthesis of AMP from IMP. The chain is Adenylosuccinate synthetase from Acetivibrio thermocellus (strain ATCC 27405 / DSM 1237 / JCM 9322 / NBRC 103400 / NCIMB 10682 / NRRL B-4536 / VPI 7372) (Clostridium thermocellum).